A 467-amino-acid chain; its full sequence is Hydroxymethylglutaryl-CoA synthase erg13A (467 aa).

Alanine 35 contacts (3S)-3-hydroxy-3-methylglutaryl-CoA. The active-site Proton donor/acceptor is the glutamate 86. (3S)-3-hydroxy-3-methylglutaryl-CoA is bound by residues cysteine 118, threonine 160, serine 209, histidine 259, lysine 268, asparagine 334, and serine 368. The Acyl-thioester intermediate role is filled by cysteine 118. Catalysis depends on histidine 259, which acts as the Proton donor/acceptor.

The protein belongs to the thiolase-like superfamily. HMG-CoA synthase family.

The catalysed reaction is acetoacetyl-CoA + acetyl-CoA + H2O = (3S)-3-hydroxy-3-methylglutaryl-CoA + CoA + H(+). It functions in the pathway metabolic intermediate biosynthesis; (R)-mevalonate biosynthesis; (R)-mevalonate from acetyl-CoA: step 2/3. Its function is as follows. Hydroxymethylglutaryl-CoA synthase; part of the first module of ergosterol biosynthesis pathway that includes the early steps of the pathway, conserved across all eukaryotes, and which results in the formation of mevalonate from acetyl-coenzyme A (acetyl-CoA). Erg13A and erg13B condense acetyl-CoA with acetoacetyl-CoA to form hydroxymethylglutaryl-CoA (HMG-CoA). The first module starts with the action of the cytosolic acetyl-CoA acetyltransferase erg10B that catalyzes the formation of acetoacetyl-CoA. The hydroxymethylglutaryl-CoA synthases erg13A and erg13B then condense acetyl-CoA with acetoacetyl-CoA to form HMG-CoA. The rate-limiting step of the early module is the reduction to mevalonate by the 3-hydroxy-3-methylglutaryl-coenzyme A (HMG-CoA) reductases hmg1 and hmg2. Mevalonate is also a precursor for the extracellular siderophore triacetylfusarinine C (TAFC). This is Hydroxymethylglutaryl-CoA synthase erg13A from Aspergillus fumigatus (strain ATCC MYA-4609 / CBS 101355 / FGSC A1100 / Af293) (Neosartorya fumigata).